The chain runs to 147 residues: D-aminoacyl-tRNA deacylase (147 aa).

The Gly-cisPro motif, important for rejection of L-amino acids signature appears at 136 to 137 (GP).

This sequence belongs to the DTD family. As to quaternary structure, homodimer.

It is found in the cytoplasm. The catalysed reaction is glycyl-tRNA(Ala) + H2O = tRNA(Ala) + glycine + H(+). It carries out the reaction a D-aminoacyl-tRNA + H2O = a tRNA + a D-alpha-amino acid + H(+). Functionally, an aminoacyl-tRNA editing enzyme that deacylates mischarged D-aminoacyl-tRNAs. Also deacylates mischarged glycyl-tRNA(Ala), protecting cells against glycine mischarging by AlaRS. Acts via tRNA-based rather than protein-based catalysis; rejects L-amino acids rather than detecting D-amino acids in the active site. By recycling D-aminoacyl-tRNA to D-amino acids and free tRNA molecules, this enzyme counteracts the toxicity associated with the formation of D-aminoacyl-tRNA entities in vivo and helps enforce protein L-homochirality. The protein is D-aminoacyl-tRNA deacylase of Streptococcus thermophilus (strain CNRZ 1066).